The following is an 86-amino-acid chain: Small ribosomal subunit protein uS15 (86 aa).

A compositionally biased stretch (polar residues) spans M1–E10. Positions M1–S21 are disordered.

It belongs to the universal ribosomal protein uS15 family. As to quaternary structure, part of the 30S ribosomal subunit. Forms a bridge to the 50S subunit in the 70S ribosome, contacting the 23S rRNA.

Its function is as follows. One of the primary rRNA binding proteins, it binds directly to 16S rRNA where it helps nucleate assembly of the platform of the 30S subunit by binding and bridging several RNA helices of the 16S rRNA. Functionally, forms an intersubunit bridge (bridge B4) with the 23S rRNA of the 50S subunit in the ribosome. The chain is Small ribosomal subunit protein uS15 from Xylella fastidiosa (strain M23).